Consider the following 155-residue polypeptide: Small ribosomal subunit protein uS7c (155 aa).

Belongs to the universal ribosomal protein uS7 family. As to quaternary structure, part of the 30S ribosomal subunit.

The protein resides in the plastid. It localises to the chloroplast. In terms of biological role, one of the primary rRNA binding proteins, it binds directly to 16S rRNA where it nucleates assembly of the head domain of the 30S subunit. The sequence is that of Small ribosomal subunit protein uS7c (rps7) from Cryptomeria japonica (Japanese cedar).